The following is a 555-amino-acid chain: Beta-hexosaminidase A (555 aa).

The signal sequence occupies residues 1–18 (MRLLIPILIFALITTAVT). A glycan (N-linked (GlcNAc...) asparagine) is linked at Asn47. Catalysis depends on Glu325, which acts as the Proton donor. Residues Asn351, Asn412, and Asn460 are each glycosylated (N-linked (GlcNAc...) asparagine).

It belongs to the glycosyl hydrolase 20 family. In terms of tissue distribution, expressed in coelomocytes and neurons of the pharyngeal region and nerve cord.

It is found in the lysosome. The catalysed reaction is Hydrolysis of terminal non-reducing N-acetyl-D-hexosamine residues in N-acetyl-beta-D-hexosaminides.. Responsible for the degradation of GM2 gangliosides, and a variety of other molecules containing terminal N-acetyl hexosamines. Degrades chitotriose. In Caenorhabditis elegans, this protein is Beta-hexosaminidase A (hex-1).